We begin with the raw amino-acid sequence, 120 residues long: uncharacterized protein (120 aa).

The next 2 membrane-spanning stretches (helical) occupy residues 8–28 and 55–75; these read PFVT…CTLV and FLEN…IGIL.

It localises to the membrane. This is an uncharacterized protein from Saccharomyces cerevisiae (strain ATCC 204508 / S288c) (Baker's yeast).